We begin with the raw amino-acid sequence, 394 residues long: Elongation factor Tu 2 (394 aa).

Residues 10–204 enclose the tr-type G domain; the sequence is KPHVNVGTIG…YLDSYIPEPE (195 aa). The interval 19–26 is G1; the sequence is GHVDHGKT. 19 to 26 contacts GTP; that stretch reads GHVDHGKT. Mg(2+) is bound at residue threonine 26. The segment at 60–64 is G2; that stretch reads GITIN. Positions 81-84 are G3; sequence DCPG. GTP is bound by residues 81–85 and 136–139; these read DCPGH and NKCD. Residues 136-139 are G4; the sequence is NKCD. A G5 region spans residues 174–176; the sequence is SAL.

This sequence belongs to the TRAFAC class translation factor GTPase superfamily. Classic translation factor GTPase family. EF-Tu/EF-1A subfamily. In terms of assembly, monomer.

The protein resides in the cytoplasm. The enzyme catalyses GTP + H2O = GDP + phosphate + H(+). Its function is as follows. GTP hydrolase that promotes the GTP-dependent binding of aminoacyl-tRNA to the A-site of ribosomes during protein biosynthesis. This Serratia proteamaculans (strain 568) protein is Elongation factor Tu 2.